Consider the following 272-residue polypeptide: Octanoyltransferase (272 aa).

The segment covering 1-12 has biased composition (polar residues); it reads MQQDPPTSQPHT. Residues 1–20 are disordered; that stretch reads MQQDPPTSQPHTPQIVDGVK. The 191-residue stretch at 65–255 folds into the BPL/LPL catalytic domain; it reads HQRPNTVIYV…EMMSFQPYEM (191 aa). Residues 103–110, 175–177, and 188–190 contribute to the substrate site; these read RGGEITWH, AIG, and GFA. Cys206 serves as the catalytic Acyl-thioester intermediate.

This sequence belongs to the LipB family.

It localises to the cytoplasm. It carries out the reaction octanoyl-[ACP] + L-lysyl-[protein] = N(6)-octanoyl-L-lysyl-[protein] + holo-[ACP] + H(+). It functions in the pathway protein modification; protein lipoylation via endogenous pathway; protein N(6)-(lipoyl)lysine from octanoyl-[acyl-carrier-protein]: step 1/2. Catalyzes the transfer of endogenously produced octanoic acid from octanoyl-acyl-carrier-protein onto the lipoyl domains of lipoate-dependent enzymes. Lipoyl-ACP can also act as a substrate although octanoyl-ACP is likely to be the physiological substrate. The protein is Octanoyltransferase of Cutibacterium acnes (strain DSM 16379 / KPA171202) (Propionibacterium acnes).